The primary structure comprises 400 residues: 8-amino-7-oxononanoate synthase (400 aa).

Arg21 lines the substrate pocket. 112–113 is a binding site for pyridoxal 5'-phosphate; sequence GY. A substrate-binding site is contributed by His137. Ser183, His211, and Thr239 together coordinate pyridoxal 5'-phosphate. An N6-(pyridoxal phosphate)lysine modification is found at Lys242. Thr358 contributes to the substrate binding site.

This sequence belongs to the class-II pyridoxal-phosphate-dependent aminotransferase family. BioF subfamily. Homodimer. Pyridoxal 5'-phosphate serves as cofactor.

The enzyme catalyses 6-carboxyhexanoyl-[ACP] + L-alanine + H(+) = (8S)-8-amino-7-oxononanoate + holo-[ACP] + CO2. It participates in cofactor biosynthesis; biotin biosynthesis. In terms of biological role, catalyzes the decarboxylative condensation of pimeloyl-[acyl-carrier protein] and L-alanine to produce 8-amino-7-oxononanoate (AON), [acyl-carrier protein], and carbon dioxide. In Burkholderia lata (strain ATCC 17760 / DSM 23089 / LMG 22485 / NCIMB 9086 / R18194 / 383), this protein is 8-amino-7-oxononanoate synthase.